Here is a 554-residue protein sequence, read N- to C-terminus: Arginine--tRNA ligase (554 aa).

The 'HIGH' region signature appears at 130–140 (ANPTGDLHIGH).

This sequence belongs to the class-I aminoacyl-tRNA synthetase family. In terms of assembly, monomer.

It localises to the cytoplasm. It catalyses the reaction tRNA(Arg) + L-arginine + ATP = L-arginyl-tRNA(Arg) + AMP + diphosphate. The polypeptide is Arginine--tRNA ligase (Staphylococcus carnosus (strain TM300)).